We begin with the raw amino-acid sequence, 472 residues long: Glutamate--tRNA ligase (472 aa).

The short motif at 10–20 is the 'HIGH' region element; sequence PSPTGYLHVGG. Zn(2+)-binding residues include C99, C101, C126, and D128. The 'KMSKS' region signature appears at 238–242; the sequence is KLSKR. Position 241 (K241) interacts with ATP.

This sequence belongs to the class-I aminoacyl-tRNA synthetase family. Glutamate--tRNA ligase type 1 subfamily. As to quaternary structure, monomer. Requires Zn(2+) as cofactor.

It is found in the cytoplasm. The catalysed reaction is tRNA(Glu) + L-glutamate + ATP = L-glutamyl-tRNA(Glu) + AMP + diphosphate. Catalyzes the attachment of glutamate to tRNA(Glu) in a two-step reaction: glutamate is first activated by ATP to form Glu-AMP and then transferred to the acceptor end of tRNA(Glu). In Photorhabdus laumondii subsp. laumondii (strain DSM 15139 / CIP 105565 / TT01) (Photorhabdus luminescens subsp. laumondii), this protein is Glutamate--tRNA ligase.